The following is a 300-amino-acid chain: 4-hydroxy-tetrahydrodipicolinate synthase (300 aa).

A pyruvate-binding site is contributed by Thr46. The active-site Proton donor/acceptor is Tyr134. The Schiff-base intermediate with substrate role is filled by Lys162. Position 204 (Val204) interacts with pyruvate.

This sequence belongs to the DapA family. In terms of assembly, homotetramer; dimer of dimers.

It is found in the cytoplasm. It catalyses the reaction L-aspartate 4-semialdehyde + pyruvate = (2S,4S)-4-hydroxy-2,3,4,5-tetrahydrodipicolinate + H2O + H(+). It functions in the pathway amino-acid biosynthesis; L-lysine biosynthesis via DAP pathway; (S)-tetrahydrodipicolinate from L-aspartate: step 3/4. Its function is as follows. Catalyzes the condensation of (S)-aspartate-beta-semialdehyde [(S)-ASA] and pyruvate to 4-hydroxy-tetrahydrodipicolinate (HTPA). This is 4-hydroxy-tetrahydrodipicolinate synthase from Heliobacterium modesticaldum (strain ATCC 51547 / Ice1).